The primary structure comprises 1357 residues: Kinectin (1357 aa).

Topologically, residues 1–6 are cytoplasmic; the sequence is MEFYES. Residues 7-29 form a helical; Signal-anchor for type II membrane protein membrane-spanning segment; sequence AYFIVLIPSIVITVIFLFFWLFM. Over 30 to 1357 the chain is Lumenal; sequence KETLYDEVLA…KEKEHYQVLE (1328 aa). Disordered regions lie at residues 48–81 and 103–218; these read IPTK…ESVP and NVVE…KQKT. Ser-75 is modified (phosphoserine; by FAM20C). Ser-77 carries the phosphoserine modification. Over residues 121–135 the composition is skewed to basic and acidic residues; that stretch reads QKPVLEEQVIKESDA. Thr-153 is modified (phosphothreonine). A Phosphoserine modification is found at Ser-156. Residues 161–171 are compositionally biased toward basic residues; it reads SKKKPGQKKSK. Residues Asn-172, Asn-435, Asn-772, Asn-904, and Asn-1055 are each glycosylated (N-linked (GlcNAc...) asparagine). A compositionally biased stretch (basic and acidic residues) spans 172 to 182; that stretch reads NGSDDQDKKVE. A coiled-coil region spans residues 330 to 1356; it reads LIHQLQEKDK…TKEKEHYQVL (1027 aa). The residue at position 1084 (Ser-1084) is a Phosphoserine. Asn-1088 and Asn-1263 each carry an N-linked (GlcNAc...) asparagine glycan. Ser-1313 carries the post-translational modification Phosphoserine. Asn-1329 carries an N-linked (GlcNAc...) asparagine glycan.

The protein belongs to the kinectin family. In terms of assembly, parallel homodimers formed between the membrane-bound and the cytosolic form, and also between 2 cytosolic forms. In terms of tissue distribution, high levels in peripheral blood lymphocytes, testis and ovary, lower levels in spleen, thymus, prostate, small intestine and colon.

The protein resides in the endoplasmic reticulum membrane. Receptor for kinesin thus involved in kinesin-driven vesicle motility. Accumulates in integrin-based adhesion complexes (IAC) upon integrin aggregation by fibronectin. The chain is Kinectin (KTN1) from Homo sapiens (Human).